A 224-amino-acid polypeptide reads, in one-letter code: MSKKTIVSMAVIRRLPRYHRCLEELLKNDIKRISSKELSERMGVTASQIRQDLNNFGGFGQQGYGYNVEELYNNLTKILGLDKTYNTIIIGAGNLGQAIANYTRFEKSGFNLKGIFDINPRLFGLKIRDVEVMDVEKVEEFIANNHIDIAILCIPKDNAQYTADRLVKAGIKAIWNFSPIDLKVPDDVILENVHLSDSLFTISYRLNEEELFKKLKGETVKVDG.

Positions 17–56 (RYHRCLEELLKNDIKRISSKELSERMGVTASQIRQDLNNF) form a DNA-binding region, H-T-H motif. NAD(+) is bound at residue 91-96 (GAGNLG).

This sequence belongs to the transcriptional regulatory Rex family. As to quaternary structure, homodimer.

It is found in the cytoplasm. Functionally, modulates transcription in response to changes in cellular NADH/NAD(+) redox state. In Caldanaerobacter subterraneus subsp. tengcongensis (strain DSM 15242 / JCM 11007 / NBRC 100824 / MB4) (Thermoanaerobacter tengcongensis), this protein is Redox-sensing transcriptional repressor Rex.